We begin with the raw amino-acid sequence, 188 residues long: Probable thymidylate kinase (188 aa).

11 to 18 provides a ligand contact to ATP; sequence GIDGSGKT.

The protein belongs to the thymidylate kinase family.

It catalyses the reaction dTMP + ATP = dTDP + ADP. The chain is Probable thymidylate kinase (tmk) from Methanocaldococcus jannaschii (strain ATCC 43067 / DSM 2661 / JAL-1 / JCM 10045 / NBRC 100440) (Methanococcus jannaschii).